Consider the following 289-residue polypeptide: Aquaporin-2 (289 aa).

Residues 1–36 (MSNESNDLEKNISHLDPTGVDNAYIPPEQPETKHSR) form a disordered region. Topologically, residues 1-47 (MSNESNDLEKNISHLDPTGVDNAYIPPEQPETKHSRFNIDRDTLRNH) are cytoplasmic. A helical membrane pass occupies residues 48 to 68 (FIAAVGEFCGTFMFLWCAYVI). Topologically, residues 69–90 (CNVANHDVALTTEPEGSHPGQL) are extracellular. The chain crosses the membrane as a helical span at residues 91 to 111 (IMIALGFGFSVMFSIWCFAGV). Residues 112–135 (SGGALNPAVSLSLCLARAISPARC) lie on the Cytoplasmic side of the membrane. Residues 117 to 119 (NPA) carry the NPA 1 motif. Residues 136-156 (VVMWFPQIIAGMAAGGAASAM) traverse the membrane as a helical segment. Topologically, residues 157–175 (TPGKVLFTNALGLGCSRSR) are extracellular. A helical transmembrane segment spans residues 176 to 196 (GLFLEMFGTAVLCLTVLMTAV). Residues 197 to 202 (EKRETN) lie on the Cytoplasmic side of the membrane. Residues 203–223 (FMAALPIGISLFMAHMALTGY) traverse the membrane as a helical segment. Residues 224–247 (TGTGVNPARSLGAAVAARYFPHYH) lie on the Extracellular side of the membrane. The short motif at 229 to 231 (NPA) is the NPA 2 element. A helical membrane pass occupies residues 248–268 (WIYWIGPLLGAFLAWSVWQLL). The Cytoplasmic segment spans residues 269–289 (QILDYTTYVNAEKAAGQKKED).

The protein belongs to the MIP/aquaporin (TC 1.A.8) family.

The protein localises to the endoplasmic reticulum membrane. It localises to the cell membrane. In terms of biological role, water channel required to facilitate the transport of water across membranes. Involved in freeze tolerance, osmotolerance and cell flocculation in liquid cultures. Is non-functional in most laboratory strains. This is Aquaporin-2 (AQY2) from Saccharomyces cerevisiae (Baker's yeast).